Consider the following 114-residue polypeptide: UPF0145 protein YG5714_0873 (114 aa).

Belongs to the UPF0145 family.

The chain is UPF0145 protein YG5714_0873 from Saccharolobus islandicus (strain Y.G.57.14 / Yellowstone #1) (Sulfolobus islandicus).